Reading from the N-terminus, the 442-residue chain is D-serine dehydratase 1 (442 aa).

An N6-(pyridoxal phosphate)lysine modification is found at Lys-118.

Belongs to the serine/threonine dehydratase family. DsdA subfamily. As to quaternary structure, monomer. Pyridoxal 5'-phosphate serves as cofactor.

The enzyme catalyses D-serine = pyruvate + NH4(+). The protein is D-serine dehydratase 1 of Escherichia coli O6:K15:H31 (strain 536 / UPEC).